A 119-amino-acid chain; its full sequence is UPF0102 protein FN1370 (119 aa).

Belongs to the UPF0102 family.

The protein is UPF0102 protein FN1370 of Fusobacterium nucleatum subsp. nucleatum (strain ATCC 25586 / DSM 15643 / BCRC 10681 / CIP 101130 / JCM 8532 / KCTC 2640 / LMG 13131 / VPI 4355).